The primary structure comprises 118 residues: Histone H4 (118 aa).

Residues 1–39 form a disordered region; sequence MATDTGSGRGKGGKGVTLGKGSKGAKASKGGKRIRTKTQ. The segment covering 7–22 has biased composition (gly residues); sequence SGRGKGGKGVTLGKGS.

The protein belongs to the histone H4 family. The nucleosome is a histone octamer containing two molecules each of H2A, H2B, H3 and H4 assembled in one H3-H4 heterotetramer and two H2A-H2B heterodimers. The octamer wraps approximately 147 bp of DNA.

It localises to the nucleus. It is found in the chromosome. Functionally, core component of nucleosome. Nucleosomes wrap and compact DNA into chromatin, limiting DNA accessibility to the cellular machineries which require DNA as a template. Histones thereby play a central role in transcription regulation, DNA repair, DNA replication and chromosomal stability. DNA accessibility is regulated via a complex set of post-translational modifications of histones, also called histone code, and nucleosome remodeling. This chain is Histone H4, found in Entamoeba histolytica (strain ATCC 30459 / HM-1:IMSS / ABRM).